A 159-amino-acid polypeptide reads, in one-letter code: Cytochrome c-type biogenesis protein CcmE (159 aa).

The Cytoplasmic segment spans residues 1–8; it reads MNIRRKNR. A helical; Signal-anchor for type II membrane protein transmembrane segment spans residues 9 to 29; it reads LWIACAVLAGLALTIGLVLYA. Residues 30–159 lie on the Periplasmic side of the membrane; sequence LRSNIDLFYT…PASVYKDPAS (130 aa). Heme is bound by residues His-130 and Tyr-134. Residues 134-147 are compositionally biased toward basic and acidic residues; that stretch reads YTPPEVEKAMEANH. Positions 134-159 are disordered; sequence YTPPEVEKAMEANHRRPASVYKDPAS.

The protein belongs to the CcmE/CycJ family.

The protein resides in the cell inner membrane. Functionally, heme chaperone required for the biogenesis of c-type cytochromes. Transiently binds heme delivered by CcmC and transfers the heme to apo-cytochromes in a process facilitated by CcmF and CcmH. The sequence is that of Cytochrome c-type biogenesis protein CcmE from Escherichia coli (strain SMS-3-5 / SECEC).